We begin with the raw amino-acid sequence, 178 residues long: Stathmin-2-B (178 aa).

The region spanning 38 to 178 (DDMEVKQLNK…KNKEQLELSG (141 aa)) is the SLD domain. A coiled-coil region spans residues 75–178 (KRKDVSLEEI…KNKEQLELSG (104 aa)).

Belongs to the stathmin family. In terms of tissue distribution, nervous tissue.

The protein resides in the cytoplasm. It is found in the membrane. It localises to the cell projection. Its subcellular location is the lamellipodium. The polypeptide is Stathmin-2-B (stmn2-b) (Xenopus laevis (African clawed frog)).